We begin with the raw amino-acid sequence, 1012 residues long: MNRIFKSIWCEQTRTWVAASEHAVARGGRASSVVASAGGLEKVLKLSILGAASLIAMGVVGPFAEEAMAANNAGVCLTYNGSSNNTSGTGGWFADGCKSAGWVQGMVTNSKTDWVGLTADDTQIVLDGSAGSIYFRTGGINGNVLTMSNATGGVLLSGLAAGVNPTDAVNMSQLTSLSTSTATGITSLSTSTATSIASLSTSMLSLGVGVVTQDASSGAISVGANSPGLTVDFAGGQGPRTLTGVAAGVNATDAVNVGQLASLSTSTAAGLSTAASGVASLSTSLLGAAGDLASLSTSASTGLATADSGIASLSTSLLGTADNVTSLSTSLSTVNANLAGLQTSVDNVVSYDDPSKSAITLGGAGVATPVLLTNVAAGKIAATSTDAVNGSQLYTLQQEFSQQYDLLTSQVSSLSTSVSGLQGSVSANTGTASGDNSTASGDNATASGTNSTANGTNSTASGDNSTASGTNASASGENSTATGTDSTASGSNSTANGTNSTASGDNSTASGTNASATGENSTATGTDSTASGSNSTANGTNSTASGDSSTASGTNASATGENSTATGTDSTASGSNSTANGTNSTASGDNSTASGTNASATGENSTATGTDSTASGSNSTANGTNSTASGDNSTASGTNASATGENSTATGTDSTASGSNSTANGANSTASGENSTATGTDSTASGSNSTANGTNSTASGDNSTASGTNASATGENSTATGTASTASGSNSTANGANSTASGAGATATGENAAATGAGATATGNNASASGTSSTAGGANAIASGENSTANGANSTASGNGSSAFGESAAAAGDGSTALGANAVASGVGSVATGAGSVASGANSSAYGTGSNATGAGSVAIGQGATASGSNSVALGTGSVASEDNTVSVGSAGSERRITNVAAGVNATDAVNVGQLNSAVSGIRNQMDGMQGQIDTLARDAYSGIAAATALTMIPDVDPGKTLAVGIGTANFKGYQASALGATARITQNLKVKTGVSYSGSNYVWGAGMSYQW.

The N-terminal stretch at 1 to 71 (MNRIFKSIWC…PFAEEAMAAN (71 aa)) is a signal peptide. The segment at 72–921 (NAGVCLTYNG…VGQLNSAVSG (850 aa)) is surface exposed passenger domain. 2 disordered regions span residues 420 to 746 (GLQG…AGAT) and 785 to 809 (ENSTANGANSTASGNGSSAFGESAA). Residues 427-442 (ANTGTASGDNSTASGD) are compositionally biased toward polar residues. Positions 443-504 (NATASGTNST…ANGTNSTASG (62 aa)) are enriched in low complexity. Residues 505–519 (DNSTASGTNASATGE) are compositionally biased toward polar residues. Residues 520 to 588 (NSTATGTDST…ANGTNSTASG (69 aa)) show a composition bias toward low complexity. Positions 589 to 603 (DNSTASGTNASATGE) are enriched in polar residues. A compositionally biased stretch (low complexity) spans 604-630 (NSTATGTDSTASGSNSTANGTNSTASG). The segment covering 631 to 645 (DNSTASGTNASATGE) has biased composition (polar residues). Low complexity-rich tracts occupy residues 646–700 (NSTA…TASG) and 708–746 (TNASATGENSTATGTASTASGSNSTANGANSTASGAGAT). The outer membrane translocation of the passenger domain stretch occupies residues 922-959 (IRNQMDGMQGQIDTLARDAYSGIAAATALTMIPDVDPG). Positions 960–1012 (KTLAVGIGTANFKGYQASALGATARITQNLKVKTGVSYSGSNYVWGAGMSYQW) are translocator domain.

It belongs to the autotransporter-2 (AT-2) (TC 1.B.40) family. As to quaternary structure, homotrimer.

The protein resides in the cell surface. Its subcellular location is the cell outer membrane. Its function is as follows. Involved in virulence. Mediates adherence to human respiratory epithelial cells. The protein is Autotransporter adhesin BpaC of Burkholderia mallei (strain ATCC 23344).